Reading from the N-terminus, the 607-residue chain is Elongation factor 4 (607 aa).

One can recognise a tr-type G domain in the interval 11-193 (GKIRNFSIIA…QIVEKVPAPT (183 aa)). Residues 23–28 (DHGKST) and 140–143 (NKID) contribute to the GTP site.

The protein belongs to the TRAFAC class translation factor GTPase superfamily. Classic translation factor GTPase family. LepA subfamily.

The protein localises to the cell membrane. It catalyses the reaction GTP + H2O = GDP + phosphate + H(+). In terms of biological role, required for accurate and efficient protein synthesis under certain stress conditions. May act as a fidelity factor of the translation reaction, by catalyzing a one-codon backward translocation of tRNAs on improperly translocated ribosomes. Back-translocation proceeds from a post-translocation (POST) complex to a pre-translocation (PRE) complex, thus giving elongation factor G a second chance to translocate the tRNAs correctly. Binds to ribosomes in a GTP-dependent manner. The protein is Elongation factor 4 of Streptococcus pneumoniae (strain Taiwan19F-14).